The following is a 601-amino-acid chain: Glutathione-regulated potassium-efflux system protein KefB (601 aa).

The next 13 helical transmembrane spans lie at 4 to 24, 29 to 49, 55 to 75, 87 to 107, 111 to 131, 152 to 172, 177 to 197, 207 to 227, 230 to 250, 262 to 282, 284 to 304, 324 to 344, and 356 to 376; these read ADLL…VPLA, IGAV…GLGF, EILH…GLEL, IFGV…GLLM, FLWQ…TAMA, VLLF…LLAG, HFDW…LIGG, FIAA…LVLS, LFMD…GVLL, AIDP…GMSL, LGVL…LVVI, MQFA…FSTA, and ALLL…MKGI. The RCK N-terminal domain occupies 400–519; sequence KPQVIVVGFG…AGVTQFSRET (120 aa).

It belongs to the monovalent cation:proton antiporter 2 (CPA2) transporter (TC 2.A.37) family. KefB subfamily. Interacts with the regulatory subunit KefG.

The protein resides in the cell inner membrane. Its function is as follows. Pore-forming subunit of a potassium efflux system that confers protection against electrophiles. Catalyzes K(+)/H(+) antiport. The protein is Glutathione-regulated potassium-efflux system protein KefB of Salmonella dublin (strain CT_02021853).